The primary structure comprises 289 residues: Cuticle collagen 19 (289 aa).

A signal peptide spans 1 to 18; it reads MGKLIVVGSCGVLVCVLA. Residues 95–289 are disordered; the sequence is SEGCPAGPPG…PCPSRAAYKA (195 aa). Triple-helical region regions lie at residues 101–130 and 147–269; these read GPPG…PGVI and GRPG…KGED. Gly residues predominate over residues 162–183; it reads GPAGGNGRRGPPGPVGGPGEQG. 2 stretches are compositionally biased toward low complexity: residues 184-207 and 223-239; these read PQGD…GEPG and PRGE…PGND.

Belongs to the cuticular collagen family. Collagen polypeptide chains are complexed within the cuticle by disulfide bonds and other types of covalent cross-links.

In terms of biological role, nematode cuticles are composed largely of collagen-like proteins. The cuticle functions both as an exoskeleton and as a barrier to protect the worm from its environment. This chain is Cuticle collagen 19 (col-19), found in Caenorhabditis elegans.